The chain runs to 862 residues: Genome polyprotein (862 aa).

Gly-2 carries the N-myristoyl glycine; by host lipid modification.

This sequence belongs to the picornaviruses polyprotein family. Interacts with capsid protein VP1 and capsid protein VP3 to form heterotrimeric protomers. As to quaternary structure, interacts with capsid protein VP0, and capsid protein VP3 to form heterotrimeric protomers. Five protomers subsequently associate to form pentamers which serve as building blocks for the capsid. Interacts with capsid protein VP2, capsid protein VP3 and capsid protein VP4 following cleavage of capsid protein VP0. In terms of assembly, interacts with capsid protein VP1 and capsid protein VP3 in the mature capsid. Interacts with capsid protein VP0 and capsid protein VP1 to form heterotrimeric protomers. Five protomers subsequently associate to form pentamers which serve as building blocks for the capsid. Interacts with capsid protein VP4 in the mature capsid. Interacts with protein 2C; this interaction may be important for virion morphogenesis. As to quaternary structure, interacts with capsid protein VP1 and capsid protein VP3. Post-translationally, specific enzymatic cleavages in vivo by the viral proteases yield processing intermediates and the mature proteins. In terms of processing, myristoylation is required for the formation of pentamers during virus assembly. Further assembly of 12 pentamers and a molecule of genomic RNA generates the provirion. During virion maturation, immature virions are rendered infectious following cleavage of VP0 into VP4 and VP2. This maturation seems to be an autocatalytic event triggered by the presence of RNA in the capsid and it is followed by a conformational change infectious virion. Post-translationally, myristoylation is required during RNA encapsidation and formation of the mature virus particle.

The protein localises to the virion. Its subcellular location is the host cytoplasm. Its function is as follows. Forms an icosahedral capsid of pseudo T=3 symmetry with capsid proteins VP2 and VP3. The capsid is 300 Angstroms in diameter, composed of 60 copies of each capsid protein and enclosing the viral positive strand RNA genome. Capsid protein VP1 mainly forms the vertices of the capsid. Capsid protein VP1 interacts with host cell receptor to provide virion attachment to target host cells. This attachment induces virion internalization. Tyrosine kinases are probably involved in the entry process. After binding to its receptor, the capsid undergoes conformational changes. Capsid protein VP1 N-terminus (that contains an amphipathic alpha-helix) and capsid protein VP4 are externalized. Together, they shape a pore in the host membrane through which viral genome is translocated to host cell cytoplasm. Forms an icosahedral capsid of pseudo T=3 symmetry with capsid proteins VP2 and VP3. The capsid is 300 Angstroms in diameter, composed of 60 copies of each capsid protein and enclosing the viral positive strand RNA genome. In terms of biological role, lies on the inner surface of the capsid shell. After binding to the host receptor, the capsid undergoes conformational changes. Capsid protein VP4 is released, Capsid protein VP1 N-terminus is externalized, and together, they shape a pore in the host membrane through which the viral genome is translocated into the host cell cytoplasm. Functionally, component of immature procapsids, which is cleaved into capsid proteins VP4 and VP2 after maturation. Allows the capsid to remain inactive before the maturation step. The sequence is that of Genome polyprotein from Echovirus 16 (strain Harrington).